The primary structure comprises 231 residues: Small ribosomal subunit protein bS18c (231 aa).

Disordered stretches follow at residues 1 to 31 and 95 to 231; these read MEKS…PIES and QKEE…TRKK. Residues 9–26 show a composition bias toward basic residues; sequence IKKKRPFRKKKRSFRKRR. 3 stretches are compositionally biased toward basic and acidic residues: residues 95 to 151, 159 to 169, and 212 to 231; these read QKEE…EFQR, TNEKQTNEKQT, and TNEK…TRKK.

This sequence belongs to the bacterial ribosomal protein bS18 family. In terms of assembly, part of the 30S ribosomal subunit.

It is found in the plastid. The protein localises to the chloroplast. The polypeptide is Small ribosomal subunit protein bS18c (Jasminum nudiflorum (Winter jasmine)).